The following is a 396-amino-acid chain: Elongation factor Tu 1 (396 aa).

In terms of domain architecture, tr-type G spans 10–206 (KPHVNVGTIG…ALDTYIPTPE (197 aa)). The interval 19 to 26 (GHVDHGKT) is G1. Residue 19–26 (GHVDHGKT) participates in GTP binding. Thr-26 lines the Mg(2+) pocket. Residues 60 to 64 (GITIN) are G2. Residues 81–84 (DCPG) are G3. GTP is bound by residues 81-85 (DCPGH) and 136-139 (NKAD). The segment at 136–139 (NKAD) is G4. The interval 174-176 (SAK) is G5.

This sequence belongs to the TRAFAC class translation factor GTPase superfamily. Classic translation factor GTPase family. EF-Tu/EF-1A subfamily. Monomer.

The protein localises to the cytoplasm. It carries out the reaction GTP + H2O = GDP + phosphate + H(+). Its function is as follows. GTP hydrolase that promotes the GTP-dependent binding of aminoacyl-tRNA to the A-site of ribosomes during protein biosynthesis. The sequence is that of Elongation factor Tu 1 from Methylobacillus flagellatus (strain ATCC 51484 / DSM 6875 / VKM B-1610 / KT).